The sequence spans 434 residues: MSPSVFKISPGINSYDWGKKGSASLAAQLATTSIPDFSIDEDKAYAELWMGTHPNNPSRLSDNTLLSEHLKSHPELIGSSVSSKFEDCKDGSLPFLFKVLSIGTALSIQAHPDKPLAKKLFDEKPDVYKDPNHKPEMAIALTPFLAFLNFLPLSVLLLHLLTVPELQEFVDSSLTESLASSLGLPTSQPPDTSLFKPTESPATAEQKDILKQIFAALMSADKKLVEEAISKLIKRYQAKRDIKENEKSLVDLALRLNDQYPGDVGVLCVFLLNVVELKRGEAAFLGANEPHAYIEGDIIECMATSDNVVRAGLTPKLRDVDTLVSMLTYEAAPGNKQLLQPTPFQKGDDTTKLYDPPIAEFSVLRTELSKGMKTSHRPVEGPSLCVITEGEGVVRNGNDRSEFVRGDVIFVGAGKEVEWEAIKGLEMFRAYVEA.

Zn(2+) contacts are provided by Q109, H111, and E136. Polar residues predominate over residues 181–191 (SLGLPTSQPPD). The interval 181 to 200 (SLGLPTSQPPDTSLFKPTES) is disordered. Position 291 (H291) interacts with Zn(2+). R310 is an active-site residue.

It belongs to the mannose-6-phosphate isomerase type 1 family. Zn(2+) serves as cofactor.

The protein localises to the cytoplasm. It carries out the reaction D-mannose 6-phosphate = D-fructose 6-phosphate. It participates in nucleotide-sugar biosynthesis; GDP-alpha-D-mannose biosynthesis; alpha-D-mannose 1-phosphate from D-fructose 6-phosphate: step 1/2. Functionally, involved in the synthesis of the GDP-mannose and dolichol-phosphate-mannose required for a number of critical mannosyl transfer reactions. This is Mannose-6-phosphate isomerase (MAN1) from Cryptococcus neoformans var. neoformans serotype D (strain JEC21 / ATCC MYA-565) (Filobasidiella neoformans).